The primary structure comprises 101 residues: UPF0060 membrane protein ACIAD1364 (101 aa).

The next 3 helical transmembrane spans lie at 24–44 (WLWL…TLHP), 50–70 (IYAA…RFID), and 79–99 (IWGG…PQGL).

This sequence belongs to the UPF0060 family.

It localises to the cell inner membrane. The chain is UPF0060 membrane protein ACIAD1364 from Acinetobacter baylyi (strain ATCC 33305 / BD413 / ADP1).